Consider the following 178-residue polypeptide: Large ribosomal subunit protein uL5 (178 aa).

The protein belongs to the universal ribosomal protein uL5 family. In terms of assembly, part of the 50S ribosomal subunit; part of the 5S rRNA/L5/L18/L25 subcomplex. Contacts the 5S rRNA and the P site tRNA. Forms a bridge to the 30S subunit in the 70S ribosome.

Functionally, this is one of the proteins that bind and probably mediate the attachment of the 5S RNA into the large ribosomal subunit, where it forms part of the central protuberance. In the 70S ribosome it contacts protein S13 of the 30S subunit (bridge B1b), connecting the 2 subunits; this bridge is implicated in subunit movement. Contacts the P site tRNA; the 5S rRNA and some of its associated proteins might help stabilize positioning of ribosome-bound tRNAs. The protein is Large ribosomal subunit protein uL5 of Acinetobacter baylyi (strain ATCC 33305 / BD413 / ADP1).